Reading from the N-terminus, the 295-residue chain is Phosphoserine phosphatase, chloroplastic (295 aa).

A chloroplast-targeting transit peptide spans 1–54 (MEALTTSRVVPVQVPCRKLSSLFANFSCLELRRYPCRGLVSIMNHPKLLRPVTA). The active-site Nucleophile is D89. Mg(2+) contacts are provided by D89 and D91. Catalysis depends on D91, which acts as the Proton donor. Residues E98, R134, 178–179 (SG), and K227 contribute to the substrate site. Mg(2+) is bound at residue D248.

Belongs to the HAD-like hydrolase superfamily. SerB family. Requires Mg(2+) as cofactor. In terms of tissue distribution, ubiquitous. Mainly expressed in shoot and root meristems, vasculature, pollen, anthers, carpels and seeds.

Its subcellular location is the plastid. It is found in the chloroplast. It carries out the reaction O-phospho-L-serine + H2O = L-serine + phosphate. The enzyme catalyses O-phospho-D-serine + H2O = D-serine + phosphate. It functions in the pathway amino-acid biosynthesis; L-serine biosynthesis; L-serine from 3-phospho-D-glycerate: step 3/3. With respect to regulation, approximately 60% inhibition of PSP activity is observed in presence of 10 mM serine. In terms of biological role, catalyzes the last step in the plastidial phosphorylated pathway of serine biosynthesis (PPSB). The reaction mechanism proceeds via the formation of a phosphoryl-enzyme intermediates. Required for embryo, pollen and root development. May be required preferentially for serine biosynthesis in non-photosynthetic tissues. This is Phosphoserine phosphatase, chloroplastic (PSP) from Arabidopsis thaliana (Mouse-ear cress).